A 21-amino-acid chain; its full sequence is Paulistine (21 aa).

Cysteine 7 and cysteine 14 are disulfide-bonded. Threonine 21 is subject to Threonine amide.

It belongs to the sylv/frat/paul family. In terms of processing, occurs in oxidized and reduced states which are thought to adopt a compact globular and linear structure, respectively.

Its function is as follows. Induces transient hyperalgesia and paw edema in mice. Probably exerts its effects via different pathways in an oxidation state-dependent way. This Polybia paulista (Neotropical social wasp) protein is Paulistine.